A 64-amino-acid chain; its full sequence is Beta-defensin 13 (64 aa).

The signal sequence occupies residues 1–22; sequence MRIFSLIVAGLVLLIQLYPAWG. 3 disulfides stabilise this stretch: Cys30–Cys57, Cys37–Cys51, and Cys41–Cys58.

This sequence belongs to the beta-defensin family. In terms of tissue distribution, expressed in testis and to a lesser extent in epididymis (caput, corpus and cauda). Also weakly expressed in kidneys.

The protein resides in the secreted. Functionally, has antibacterial activity. This is Beta-defensin 13 (Defb13) from Mus musculus (Mouse).